The sequence spans 278 residues: Large ribosomal subunit protein uL2 (278 aa).

The tract at residues 226–278 (NPIDHPHGGGEGRTSGGRHPVTPWGKPTKGKKTRSNKSTDKFILISRHKRKKK) is disordered.

This sequence belongs to the universal ribosomal protein uL2 family. Part of the 50S ribosomal subunit. Forms a bridge to the 30S subunit in the 70S ribosome.

One of the primary rRNA binding proteins. Required for association of the 30S and 50S subunits to form the 70S ribosome, for tRNA binding and peptide bond formation. It has been suggested to have peptidyltransferase activity; this is somewhat controversial. Makes several contacts with the 16S rRNA in the 70S ribosome. The polypeptide is Large ribosomal subunit protein uL2 (Rhodopseudomonas palustris (strain HaA2)).